The sequence spans 1001 residues: Phosphatidylinositol 4,5-bisphosphate 5-phosphatase A (1001 aa).

Residues 1 to 12 are compositionally biased toward polar residues; sequence MEGQSRSGSAKS. Disordered regions lie at residues 1-130 and 144-412; these read MEGQ…VASV and SASA…QPTC. An RSXSXX motif 1 motif is present at residues 6 to 11; that stretch reads RSGSAK. Over residues 13-28 the composition is skewed to low complexity; the sequence is GTRTGLGPLPGTHGAL. Over residues 29 to 42 the composition is skewed to polar residues; the sequence is QTGTPSKKVNSSFQ. R56 carries the post-translational modification Asymmetric dimethylarginine; alternate. R56 carries the omega-N-methylarginine; alternate modification. R65 is subject to Omega-N-methylarginine. R76 is modified (asymmetric dimethylarginine). Asymmetric dimethylarginine; alternate is present on R83. R83 is subject to Omega-N-methylarginine; alternate. Over residues 161–174 the composition is skewed to polar residues; the sequence is SPTSRDQKQLSPTS. Phosphoserine is present on S171. The segment covering 180–196 has biased composition (low complexity); sequence ALATSGLSLALASQEQP. Residues 197-210 show a composition bias toward pro residues; the sequence is PQSPSSPSPVPSPV. Positions 284–294 are enriched in basic and acidic residues; that stretch reads ARPEAPRHSPE. S292 and S325 each carry phosphoserine. The span at 338-348 shows a compositional bias: pro residues; sequence VPPPLPKPPRS. The short motif at 346–351 is the SH3-binding element; sequence PRSPSR. 2 stretches are compositionally biased toward low complexity: residues 349-361 and 394-411; these read PSRS…NRSP and SPVA…AQPT. The RSXSXX motif 2 motif lies at 351–356; that stretch reads RSPSRS. Positions 420–723 are catalytic; the sequence is ITVVTWNVGT…SDHKPVAARF (304 aa). Residues 724 to 835 form a required for ruffle localization region; that stretch reads LLQFAFRDDV…IGVTEPFQIS (112 aa). The interval 837–1001 is disordered; that stretch reads PTSESASSST…LGLEDGGLGP (165 aa). Low complexity predominate over residues 838–853; the sequence is TSESASSSTDSSGTSS. 2 consecutive short sequence motifs (RSXSXX motif) follow at residues 869–874 and 880–885; these read RSPSPG and RSRSPG. S898 is subject to Phosphoserine. Composition is skewed to low complexity over residues 905 to 917 and 925 to 936; these read SRSP…QLPR and SSGSRGSSEEGP. The RSXSXX motif 5 motif lies at 906–911; the sequence is RSPSPQ. Residues 937–949 show a composition bias toward pro residues; sequence SGPPGPWAFPPAV. S985 is modified (phosphoserine).

It belongs to the inositol 1,4,5-trisphosphate 5-phosphatase type II family. Post-translationally, phosphorylated on Ser/Thr residues. In terms of tissue distribution, expressed in heart, brain, kidney, stomach, small intestine and lung. Not expressed in spleen, thymus, skeletal muscle, testis and skin.

It is found in the cytoplasm. It carries out the reaction 1D-myo-inositol 1,4,5-trisphosphate + H2O = 1D-myo-inositol 1,4-bisphosphate + phosphate. The enzyme catalyses 1D-myo-inositol 1,3,4,5-tetrakisphosphate + H2O = 1D-myo-inositol 1,3,4-trisphosphate + phosphate. The catalysed reaction is a 1,2-diacyl-sn-glycero-3-phospho-(1D-myo-inositol-4,5-bisphosphate) + H2O = a 1,2-diacyl-sn-glycero-3-phospho-(1D-myo-inositol 4-phosphate) + phosphate. Functionally, inositol 5-phosphatase, which converts inositol 1,4,5-trisphosphate to inositol 1,4-bisphosphate. Also converts phosphatidylinositol 4,5-bisphosphate to phosphatidylinositol 4-phosphate and inositol 1,3,4,5-tetrakisphosphate to inositol 1,3,4-trisphosphate in vitro. May be involved in modulation of the function of inositol and phosphatidylinositol polyphosphate-binding proteins that are present at membranes ruffles. This is Phosphatidylinositol 4,5-bisphosphate 5-phosphatase A (Inpp5j) from Rattus norvegicus (Rat).